The following is a 188-amino-acid chain: Ribosome hibernation promotion factor (188 aa).

The disordered stretch occupies residues 93–125; sequence KTRVNRKKRKESEHEPFPATPETPPETAVDHDK.

Belongs to the HPF/YfiA ribosome-associated protein family. Long HPF subfamily. In terms of assembly, interacts with 100S ribosomes.

Its subcellular location is the cytoplasm. In terms of biological role, required for dimerization of active 70S ribosomes into 100S ribosomes in stationary phase; 100S ribosomes are translationally inactive and sometimes present during exponential growth. The protein is Ribosome hibernation promotion factor of Staphylococcus carnosus (strain TM300).